The following is a 189-amino-acid chain: UPF0301 protein RP032 (189 aa).

It belongs to the UPF0301 (AlgH) family.

In Rickettsia prowazekii (strain Madrid E), this protein is UPF0301 protein RP032.